The primary structure comprises 115 residues: Large ribosomal subunit protein bL20 (115 aa).

It belongs to the bacterial ribosomal protein bL20 family.

Binds directly to 23S ribosomal RNA and is necessary for the in vitro assembly process of the 50S ribosomal subunit. It is not involved in the protein synthesizing functions of that subunit. The sequence is that of Large ribosomal subunit protein bL20 from Synechococcus sp. (strain CC9311).